Here is a 356-residue protein sequence, read N- to C-terminus: MDKYLIKMPTKTNLNGDQKPAALKGTPKTIDKQKEKNTPTEKQKQEDDYVEKENTPKLRNAQIAKPASKRKNQDTPTEVKDIKNEEDGENPPKRRSARLTRSTRSMAEEGTPSPEKEKPEKLPFIKYKGAIKYYTENHEIAASADDVIQWIDKQTTLDVVPMAFDMEWPFSFQTGPGKSSVIQVCVDERCCYVYQLSKLKKLPAALVALLNHPKVRLHGVNIKADFRKLQRDFPEVSADPLIEKCVDLGVWCNEICETGGRWSLERLANFIAKKAMDKSKKVRMSKWHVIPLDENQLMYAAIDVYIGQVIYRDLEQREKVKLQNEANFKEQNGDAAFKAVKALGETFLDKITQVTI.

The tract at residues 1–120 is disordered; sequence MDKYLIKMPT…TPSPEKEKPE (120 aa). Basic and acidic residues-rich tracts occupy residues 29 to 56 and 71 to 85; these read TIDKQKEKNTPTEKQKQEDDYVEKENTP and KNQDTPTEVKDIKNE. Low complexity predominate over residues 99 to 113; it reads LTRSTRSMAEEGTPS. 2 positions are modified to phosphoserine: serine 105 and serine 113. The 3'-5' exonuclease domain maps to 155-316; sequence TTLDVVPMAF…GQVIYRDLEQ (162 aa). 3 residues coordinate Mg(2+): aspartate 165, glutamate 167, and aspartate 303.

The protein belongs to the WRNexo family.

It is found in the nucleus. In terms of biological role, has exonuclease activity on both single-stranded and duplex templates bearing overhangs, but not blunt ended duplex DNA, and cleaves in a 3'-5' direction. Essential for the formation of DNA replication focal centers. Has an important role in maintaining genome stability. The chain is 3'-5' exonuclease from Drosophila willistoni (Fruit fly).